A 598-amino-acid polypeptide reads, in one-letter code: Dihydroxy-acid dehydratase, mitochondrial (598 aa).

Residues 1–18 (MMFCKLLRCQNGIASKRA) constitute a mitochondrion transit peptide. C84 is a [2Fe-2S] cluster binding site. Residue D116 participates in Mg(2+) binding. Residue C157 coordinates [2Fe-2S] cluster. D158 contributes to the Mg(2+) binding site. C232 provides a ligand contact to [2Fe-2S] cluster. E485 contributes to the Mg(2+) binding site. S511 serves as the catalytic Proton acceptor.

It belongs to the IlvD/Edd family. The cofactor is [2Fe-2S] cluster. Mg(2+) serves as cofactor.

The protein resides in the mitochondrion. It catalyses the reaction (2R)-2,3-dihydroxy-3-methylbutanoate = 3-methyl-2-oxobutanoate + H2O. The enzyme catalyses (2R,3R)-2,3-dihydroxy-3-methylpentanoate = (S)-3-methyl-2-oxopentanoate + H2O. It participates in amino-acid biosynthesis; L-isoleucine biosynthesis; L-isoleucine from 2-oxobutanoate: step 3/4. Its pathway is amino-acid biosynthesis; L-valine biosynthesis; L-valine from pyruvate: step 3/4. In terms of biological role, dihydroxyacid dehydratase that catalyzes the third step in the common pathway leading to biosynthesis of branched-chain amino acids. Catalyzes the dehydration of (2R,3R)-2,3-dihydroxy-3-methylpentanoate (2,3-dihydroxy-3-methylvalerate) into 2-oxo-3-methylpentanoate (2-oxo-3-methylvalerate) and of (2R)-2,3-dihydroxy-3-methylbutanoate (2,3-dihydroxyisovalerate) into 2-oxo-3-methylbutanoate (2-oxoisovalerate), the penultimate precursor to L-isoleucine and L-valine, respectively. The chain is Dihydroxy-acid dehydratase, mitochondrial from Schizosaccharomyces pombe (strain 972 / ATCC 24843) (Fission yeast).